The sequence spans 207 residues: Protein N-terminal glutamine amidohydrolase (207 aa).

Active-site residues include Cys30, His83, and Asp99.

It belongs to the NTAQ1 family. As to quaternary structure, monomer.

The protein localises to the cytoplasm. It is found in the cytosol. The protein resides in the nucleus. The catalysed reaction is N-terminal L-glutaminyl-[protein] + H2O = N-terminal L-glutamyl-[protein] + NH4(+). Functionally, mediates the side-chain deamidation of N-terminal glutamine residues to glutamate, an important step in N-end rule pathway of protein degradation. Conversion of the resulting N-terminal glutamine to glutamate renders the protein susceptible to arginylation, polyubiquitination and degradation as specified by the N-end rule. Does not act on substrates with internal or C-terminal glutamine and does not act on non-glutamine residues in any position. Does not deaminate acetylated N-terminal glutamine. With the exception of proline, all tested second-position residues on substrate peptides do not greatly influence the activity. In contrast, a proline at position 2, virtually abolishes deamidation of N-terminal glutamine. This is Protein N-terminal glutamine amidohydrolase (Ntaq1) from Rattus norvegicus (Rat).